Reading from the N-terminus, the 772-residue chain is Carnitine O-palmitoyltransferase 1, muscle isoform (772 aa).

Topologically, residues Met1–Lys47 are cytoplasmic. Residues Asn48–Ser73 form a helical membrane-spanning segment. At Phe74–Gln102 the chain is on the mitochondrial intermembrane side. Residues Thr103–Phe122 form a helical membrane-spanning segment. Residues Phe123–Ser772 lie on the Cytoplasmic side of the membrane. His473 (proton acceptor) is an active-site residue. Gly555–Asp567 lines the CoA pocket. (R)-carnitine is bound by residues Tyr589 and Thr602.

Belongs to the carnitine/choline acetyltransferase family. As to expression, strong expression in heart and skeletal muscle. No expression in liver and kidney.

Its subcellular location is the mitochondrion outer membrane. It catalyses the reaction (R)-carnitine + hexadecanoyl-CoA = O-hexadecanoyl-(R)-carnitine + CoA. It functions in the pathway lipid metabolism; fatty acid beta-oxidation. Its function is as follows. Catalyzes the transfer of the acyl group of long-chain fatty acid-CoA conjugates onto carnitine, an essential step for the mitochondrial uptake of long-chain fatty acids and their subsequent beta-oxidation in the mitochondrion. The protein is Carnitine O-palmitoyltransferase 1, muscle isoform (CPT1B) of Homo sapiens (Human).